The chain runs to 56 residues: Small ribosomal subunit protein uS14 (56 aa).

Zn(2+) contacts are provided by cysteine 21, cysteine 24, cysteine 39, and cysteine 42.

This sequence belongs to the universal ribosomal protein uS14 family. Zinc-binding uS14 subfamily. Part of the 30S ribosomal subunit. The cofactor is Zn(2+).

Functionally, binds 16S rRNA, required for the assembly of 30S particles. This is Small ribosomal subunit protein uS14 from Methanospirillum hungatei JF-1 (strain ATCC 27890 / DSM 864 / NBRC 100397 / JF-1).